Here is a 1388-residue protein sequence, read N- to C-terminus: MTKPYSIGLDIGTNSVGWAVTTDNYKVPSKKMKVLGNTSKKYIKKNLLGVLLFDSGITAEGRRLKRTARRRYTRRRNRILYLQEIFSTEMATLDDAFFQRLDDSFLVPDDKRDSKYPIFGNLVEEKAYHDEFPTIYHLRKYLADSTKKADLRLVYLALAHMIKYRGHFLIEGEFNSKNNDIQKNFQDFLDTYNAIFESDLSLENSKQLEEIVKDKISKLEKKDRILKLFPGEKNSGIFSEFLKLIVGNQADFRKCFNLDEKASLHFSKESYDEDLETLLGYIGDDYSDVFLKAKKLYDAILLSGFLTVTDNETEAPLSSAMIKRYNEHKEDLALLKEYIRNISLKTYNEVFKDDTKNGYAGYIDGKTNQEDFYVYLKKLLAEFEGADYFLEKIDREDFLRKQRTFDNGSIPYQIHLQEMRAILDKQAKFYPFLAKNKERIEKILTFRIPYYVGPLARGNSDFAWSIRKRNEKITPWNFEDVIDKESSAEAFINRMTSFDLYLPEEKVLPKHSLLYETFNVYNELTKVRFIAESMRDYQFLDSKQKKDIVRLYFKDKRKVTDKDIIEYLHAIYGYDGIELKGIEKQFNSSLSTYHDLLNIINDKEFLDDSSNEAIIEEIIHTLTIFEDREMIKQRLSKFENIFDKSVLKKLSRRHYTGWGKLSAKLINGIRDEKSGNTILDYLIDDGISNRNFMQLIHDDALSFKKKIQKAQIIGDEDKGNIKEVVKSLPGSPAIKKGILQSIKIVDELVKVMGGRKPESIVVEMARENQYTNQGKSNSQQRLKRLEKSLKELGSKILKENIPAKLSKIDNNALQNDRLYLYYLQNGKDMYTGDDLDIDRLSNYDIDHIIPQAFLKDNSIDNKVLVSSASNRGKSDDVPSLEVVKKRKTFWYQLLKSKLISQRKFDNLTKAERGGLSPEDKAGFIQRQLVETRQITKHVARLLDEKFNNKKDENNRAVRTVKIITLKSTLVSQFRKDFELYKVREINDFHHAHDAYLNAVVASALLKKYPKLEPEFVYGDYPKYNSFRERKSATEKVYFYSNIMNIFKKSISLADGRVIERPLIEVNEETGESVWNKESDLATVRRVLSYPQVNVVKKVEEQNHGLDRGKPKGLFNANLSSKPKPNSNENLVGAKEYLDPKKYGGYAGISNSFTVLVKGTIEKGAKKKITNVLEFQGISILDRINYRKDKLNFLLEKGYKDIELIIELPKYSLFELSDGSRRMLASILSTNNKRGEIHKGNQIFLSQKFVKLLYHAKRISNTINENHRKYVENHKKEFEELFYYILEFNENYVGAKKNGKLLNSAFQSWQNHSIDELCSSFIGPTGSERKGLFELTSRGSAADFEFLGVKIPRYRDYTPSSLLKDATLIHQSVTGLYETRIDLAKLGEG.

The active-site For RuvC-like nuclease domain is Asp-10. 3 residues coordinate Mg(2+): Asp-10, Glu-763, and Glu-767. Residues 771–928 (TNQGKSNSQQ…DKAGFIQRQL (158 aa)) enclose the HNH Cas9-type domain. His-847 (proton acceptor for HNH nuclease domain) is an active-site residue. His-990 provides a ligand contact to Mg(2+). The segment covering 1100–1109 (EQNHGLDRGK) has biased composition (basic and acidic residues). The interval 1100-1130 (EQNHGLDRGKPKGLFNANLSSKPKPNSNENL) is disordered. The tract at residues 1102–1388 (NHGLDRGKPK…RIDLAKLGEG (287 aa)) is PAM-interacting domain (PI). Residues 1116-1129 (ANLSSKPKPNSNEN) show a composition bias toward polar residues.

It belongs to the CRISPR-associated protein Cas9 family. Subtype II-A subfamily. In terms of assembly, monomer. Binds crRNA and tracrRNA. Mg(2+) is required as a cofactor.

Its function is as follows. CRISPR (clustered regularly interspaced short palindromic repeat) is an adaptive immune system that provides protection against mobile genetic elements (viruses, transposable elements and conjugative plasmids). CRISPR clusters contain spacers, sequences complementary to antecedent mobile elements, and target invading nucleic acids. CRISPR clusters are transcribed and processed into CRISPR RNA (crRNA). In type II CRISPR systems correct processing of pre-crRNA requires a trans-encoded small RNA (tracrRNA), endogenous ribonuclease 3 (rnc) and this protein. The tracrRNA serves as a guide for ribonuclease 3-aided processing of pre-crRNA. Subsequently Cas9/crRNA/tracrRNA endonucleolytically cleaves linear or circular dsDNA target complementary to the spacer yielding blunt ends; Cas9 is inactive in the absence of the 2 guide RNAs (gRNA). Cas9 recognizes a 3'-G-rich protospacer adjacent motif (PAM, GGG in this organism) in the CRISPR repeat sequences to help distinguish self versus nonself, as targets within the bacterial CRISPR locus do not have PAMs. PAM recognition is also required for catalytic activity. Complements the gRNA coprocessing defect in a cas9 deletion in S.pyogenes strain 370, and cuts target DNA in Cas9:gRNAs mixing experiments with S.mutans strain UA159. The sequence is that of CRISPR-associated endonuclease Cas9 2 from Streptococcus thermophilus (strain ATCC BAA-491 / LMD-9).